The primary structure comprises 808 residues: Leucine--tRNA ligase (808 aa).

Residues 40 to 51 (PYPSGQGLHVGH) carry the 'HIGH' region motif. Positions 580–584 (KMSKS) match the 'KMSKS' region motif. An ATP-binding site is contributed by lysine 583.

The protein belongs to the class-I aminoacyl-tRNA synthetase family.

The protein resides in the cytoplasm. The catalysed reaction is tRNA(Leu) + L-leucine + ATP = L-leucyl-tRNA(Leu) + AMP + diphosphate. This chain is Leucine--tRNA ligase, found in Leuconostoc mesenteroides subsp. mesenteroides (strain ATCC 8293 / DSM 20343 / BCRC 11652 / CCM 1803 / JCM 6124 / NCDO 523 / NBRC 100496 / NCIMB 8023 / NCTC 12954 / NRRL B-1118 / 37Y).